Reading from the N-terminus, the 407-residue chain is RING-H2 finger protein ATL43 (407 aa).

Positions 1–22 are cleaved as a signal peptide; that stretch reads MSSSSLILLFSTLSLFLNVSLA. The helical transmembrane segment at 57-77 threads the bilayer; that stretch reads GIAVVIAVLTAFFSLTFLLLL. An RING-type; atypical zinc finger spans residues 146-188; that stretch reads CAVCLARFEPTEVLRLLPKCKHAFHVECVDTWLDAHSTCPLCR.

It belongs to the RING-type zinc finger family. ATL subfamily.

Its subcellular location is the membrane. It catalyses the reaction S-ubiquitinyl-[E2 ubiquitin-conjugating enzyme]-L-cysteine + [acceptor protein]-L-lysine = [E2 ubiquitin-conjugating enzyme]-L-cysteine + N(6)-ubiquitinyl-[acceptor protein]-L-lysine.. It functions in the pathway protein modification; protein ubiquitination. This is RING-H2 finger protein ATL43 (ATL43) from Arabidopsis thaliana (Mouse-ear cress).